Here is a 198-residue protein sequence, read N- to C-terminus: Ribonuclease HII (198 aa).

Residues 10–198 form the RNase H type-2 domain; it reads HLVAGVDEVG…PVRRALGIAS (189 aa). Residues D16, E17, and D108 each contribute to the a divalent metal cation site.

This sequence belongs to the RNase HII family. It depends on Mn(2+) as a cofactor. Requires Mg(2+) as cofactor.

It is found in the cytoplasm. The enzyme catalyses Endonucleolytic cleavage to 5'-phosphomonoester.. In terms of biological role, endonuclease that specifically degrades the RNA of RNA-DNA hybrids. The polypeptide is Ribonuclease HII (Cronobacter sakazakii (strain ATCC BAA-894) (Enterobacter sakazakii)).